The primary structure comprises 1121 residues: CRISPR-associated endonuclease Cas9 1 (1121 aa).

Catalysis depends on D9, which acts as the For RuvC-like nuclease domain. 3 residues coordinate Mg(2+): D9, E509, and E513. Positions 516-684 (EDDEKKAIQK…VRKKFIERNL (169 aa)) constitute an HNH Cas9-type domain. H599 acts as the Proton acceptor for HNH nuclease domain in catalysis. H738 serves as a coordination point for Mg(2+).

It belongs to the CRISPR-associated protein Cas9 family. Subtype II-A subfamily. Monomer. Binds crRNA and tracrRNA. The cofactor is Mg(2+).

Functionally, CRISPR (clustered regularly interspaced short palindromic repeat) is an adaptive immune system that provides protection against mobile genetic elements (viruses, transposable elements and conjugative plasmids). CRISPR clusters contain spacers, sequences complementary to antecedent mobile elements, and target invading nucleic acids. CRISPR clusters are transcribed and processed into CRISPR RNA (crRNA). In type II CRISPR systems correct processing of pre-crRNA requires a trans-encoded small RNA (tracrRNA), endogenous ribonuclease 3 (rnc) and this protein. The tracrRNA serves as a guide for ribonuclease 3-aided processing of pre-crRNA. Subsequently Cas9/crRNA/tracrRNA endonucleolytically cleaves linear or circular dsDNA target complementary to the spacer; Cas9 is inactive in the absence of the 2 guide RNAs (gRNA). Cas9 recognizes the protospacer adjacent motif (PAM) in the CRISPR repeat sequences to help distinguish self versus nonself, as targets within the bacterial CRISPR locus do not have PAMs. PAM recognition is also required for catalytic activity. Cuts target DNA when Cas9 and gRNAs are mixed. The protein is CRISPR-associated endonuclease Cas9 1 of Streptococcus thermophilus (strain ATCC BAA-491 / LMD-9).